We begin with the raw amino-acid sequence, 288 residues long: Quinate/shikimate dehydrogenase (288 aa).

Substrate is bound by residues Lys71 and Asp107. NAD(+) is bound by residues 132–135, 155–158, Lys205, 232–235, and Gly255; these read AGGA, NRRD, and CVYN.

The protein belongs to the shikimate dehydrogenase family. In terms of assembly, homodimer.

The catalysed reaction is L-quinate + NAD(+) = 3-dehydroquinate + NADH + H(+). It carries out the reaction L-quinate + NADP(+) = 3-dehydroquinate + NADPH + H(+). It catalyses the reaction shikimate + NADP(+) = 3-dehydroshikimate + NADPH + H(+). The enzyme catalyses shikimate + NAD(+) = 3-dehydroshikimate + NADH + H(+). Its pathway is metabolic intermediate biosynthesis; chorismate biosynthesis; chorismate from D-erythrose 4-phosphate and phosphoenolpyruvate: step 4/7. Functionally, the actual biological function of YdiB remains unclear, nor is it known whether 3-dehydroshikimate or quinate represents the natural substrate. Catalyzes the reversible NAD-dependent reduction of both 3-dehydroshikimate (DHSA) and 3-dehydroquinate to yield shikimate (SA) and quinate, respectively. It can use both NAD or NADP for catalysis, however it has higher catalytic efficiency with NAD. This chain is Quinate/shikimate dehydrogenase, found in Shigella flexneri.